A 113-amino-acid polypeptide reads, in one-letter code: Ig heavy chain V-III region U61 (113 aa).

The region spanning Glu-1–Val-113 is the Ig-like domain. A disulfide bridge connects residues Cys-22 and Cys-98.

The polypeptide is Ig heavy chain V-III region U61 (Mus musculus (Mouse)).